Here is a 1054-residue protein sequence, read N- to C-terminus: DIS3-like exonuclease 1 (1054 aa).

The CSD1 domain occupies 236 to 309 (AGIKSGRYIQ…PKNEWKGRTV (74 aa)). The region spanning 365–431 (ILVTPWDYRI…GEIATILVEN (67 aa)) is the CSD2 domain. Residues 465–816 (RKDLRKSHLV…VHRLLMAAIS (352 aa)) enclose the RNB domain. Residue serine 989 is modified to Phosphoserine.

It belongs to the RNR ribonuclease family. Component of the RNA exosome complex. The catalytically inactive RNA exosome core (Exo-9) complex is believed to associate with catalytic subunits EXOSC10, and DIS3 or DIS3L in cytoplasmic- and nuclear-specific RNA exosome complex forms. Mg(2+) is required as a cofactor.

It is found in the cytoplasm. The catalysed reaction is Exonucleolytic cleavage in the 3'- to 5'-direction to yield nucleoside 5'-phosphates.. In terms of biological role, catalytic component of the RNA exosome complex which has 3'-&gt;5' exoribonuclease activity and participates in a multitude of cellular RNA processing and degradation events. In the cytoplasm, the RNA exosome complex is involved in general mRNA turnover and specifically degrades inherently unstable mRNAs containing AU-rich elements (AREs) within their 3' untranslated regions, and in RNA surveillance pathways, preventing translation of aberrant mRNAs. It seems to be involved in degradation of histone mRNA. The chain is DIS3-like exonuclease 1 (DIS3L) from Homo sapiens (Human).